The primary structure comprises 318 residues: Malate dehydrogenase (318 aa).

NAD(+) is bound by residues 10–15 and aspartate 34; that span reads GGGQIG. Substrate is bound by residues arginine 83 and arginine 89. Residues asparagine 96 and 119–121 each bind NAD(+); that span reads LSN. Asparagine 121 and arginine 152 together coordinate substrate. Histidine 176 (proton acceptor) is an active-site residue.

Belongs to the LDH/MDH superfamily. MDH type 3 family.

The enzyme catalyses (S)-malate + NAD(+) = oxaloacetate + NADH + H(+). In terms of biological role, catalyzes the reversible oxidation of malate to oxaloacetate. This is Malate dehydrogenase from Syntrophotalea carbinolica (strain DSM 2380 / NBRC 103641 / GraBd1) (Pelobacter carbinolicus).